Here is a 154-residue protein sequence, read N- to C-terminus: Lipoprotein signal peptidase (154 aa).

The next 2 helical transmembrane spans lie at 57–77 and 86–103; these read LVLS…MIKY and ISLS…YDRV. Residues aspartate 110 and aspartate 129 contribute to the active site. The chain crosses the membrane as a helical span at residues 124-144; that stretch reads VFNVADICVVVGTIMIAIFIV.

Belongs to the peptidase A8 family.

Its subcellular location is the cell membrane. It catalyses the reaction Release of signal peptides from bacterial membrane prolipoproteins. Hydrolyzes -Xaa-Yaa-Zaa-|-(S,diacylglyceryl)Cys-, in which Xaa is hydrophobic (preferably Leu), and Yaa (Ala or Ser) and Zaa (Gly or Ala) have small, neutral side chains.. It functions in the pathway protein modification; lipoprotein biosynthesis (signal peptide cleavage). In terms of biological role, this protein specifically catalyzes the removal of signal peptides from prolipoproteins. This is Lipoprotein signal peptidase from Clostridium acetobutylicum (strain ATCC 824 / DSM 792 / JCM 1419 / IAM 19013 / LMG 5710 / NBRC 13948 / NRRL B-527 / VKM B-1787 / 2291 / W).